Reading from the N-terminus, the 53-residue chain is uncharacterized protein (53 aa).

This is an uncharacterized protein from Archaeoglobus fulgidus (strain ATCC 49558 / DSM 4304 / JCM 9628 / NBRC 100126 / VC-16).